Reading from the N-terminus, the 1854-residue chain is Calcium-channel protein cch1 (1854 aa).

Residues 1-15 (MSSSSNSDPSSSPDN) are compositionally biased toward low complexity. The interval 1–33 (MSSSSNSDPSSSPDNTDFIPLKDNPKDTSSYIN) is disordered. N-linked (GlcNAc...) asparagine glycosylation occurs at asparagine 40. 3 helical membrane passes run 184 to 204 (HPLYNIFIFVVIVLHAVLLMI), 220 to 240 (IIVIGILYTLEMLLKIYLFGF), and 274 to 294 (DFVAIVALWISVIGKKQQGIF). N-linked (GlcNAc...) asparagine glycosylation is present at asparagine 310. 8 consecutive transmembrane segments (helical) span residues 328-348 (PLVQVVSFNAFFGVMIAILGV), 427-447 (FFNSLELIFVIMSSNGFTDIM), 461-481 (LFIISAYFLTLWLMSLVIAVV), 514-534 (YLFYSNFIWISFIVAQFVTLC), 549-569 (LIFYACVDFLLAAEVILRFFA), 581-601 (YTNLVDIVLAVLNLVTLLPSI), 606-626 (VAFGWLSIFAIARIYRCILLI), and 642-662 (QLLNLMLFLVIVLFIASLCAV). A glycan (N-linked (GlcNAc...) asparagine) is linked at asparagine 699. The chain crosses the membrane as a helical span at residues 723–743 (FFTLWFLFSNNVVLSMFIAVI). Asparagine 786 carries an N-linked (GlcNAc...) asparagine glycan. A run of 3 helical transmembrane segments spans residues 946-966 (VFIYACILTAVIIECIATPIY), 980-1000 (FVWTEVAFATIFTIEAAIKII), and 1021-1041 (FFVLVTLWINLYAVLTSHALL). Asparagine 1058 carries an N-linked (GlcNAc...) asparagine glycan. 2 helical membrane passes run 1075-1095 (FFKIFSAAVVSATLLIPFALW) and 1148-1168 (FPHALLALFEIASIEGWVDIM). Asparagine 1184 carries N-linked (GlcNAc...) asparagine glycosylation. The next 4 membrane-spanning stretches (helical) occupy residues 1193 to 1213 (FVLFNLVSMIYILTLFIAIII), 1274 to 1294 (FTGLYIVHLLFLLTIFYPCPI), 1302 to 1322 (SIFLILSICYTINICVKVYGL), and 1331 to 1351 (FWNMFDVVVTLGSLTCNIAIL). A glycan (N-linked (GlcNAc...) asparagine) is linked at asparagine 1356. 3 helical membrane-spanning segments follow: residues 1358–1378 (SLTLLQTTLLVLVTVHLIPKF), 1393–1413 (PSIFSLIATWIVLYITFAIAF), and 1486–1506 (FIAWNIISMYIFVNMFITVVF). Residues asparagine 1508 and asparagine 1773 are each glycosylated (N-linked (GlcNAc...) asparagine). Residues 1764–1792 (TIASGEGDDNHSVEDHLKVPTDNEPRRSP) are disordered. The segment covering 1771 to 1790 (DDNHSVEDHLKVPTDNEPRR) has biased composition (basic and acidic residues).

Belongs to the calcium channel alpha-1 subunit (TC 1.A.1.11) family. Interacts with yam8 to form a Ca(2+) influx channel.

The protein resides in the cell membrane. Voltage-gated, high-affinity calcium channel that functions together with yam8 to mediate calcium entry into cells. Required during conditions of environmental stress. In Schizosaccharomyces pombe (strain 972 / ATCC 24843) (Fission yeast), this protein is Calcium-channel protein cch1 (cch1).